We begin with the raw amino-acid sequence, 102 residues long: Large ribosomal subunit protein uL24 (102 aa).

It belongs to the universal ribosomal protein uL24 family. In terms of assembly, part of the 50S ribosomal subunit.

One of two assembly initiator proteins, it binds directly to the 5'-end of the 23S rRNA, where it nucleates assembly of the 50S subunit. Its function is as follows. One of the proteins that surrounds the polypeptide exit tunnel on the outside of the subunit. In Paraburkholderia phytofirmans (strain DSM 17436 / LMG 22146 / PsJN) (Burkholderia phytofirmans), this protein is Large ribosomal subunit protein uL24.